The following is a 580-amino-acid chain: Mucolipin-1 (580 aa).

Positions Met1 to Glu38 are disordered. Residues Met1–Lys65 are Cytoplasmic-facing. Phosphoserine is present on Ser10. The Dileucine motif; mediates targeting to lysosomes motif lies at Glu11–Leu16. Residues Arg42–Lys62 form an interaction with phosphoinositides region. The helical transmembrane segment at Leu66–Ser86 threads the bilayer. Residues Asn87–Arg298 lie on the Extracellular side of the membrane. The extracellular/lumenal pore loop stretch occupies residues Leu107–Thr121. Cys166 and Cys192 are oxidised to a cystine. 2 N-linked (GlcNAc...) asparagine glycosylation sites follow: Asn220 and Asn230. The cysteines at positions 253 and 284 are disulfide-linked. The helical transmembrane segment at Leu299–Leu321 threads the bilayer. Over Arg322 to Phe350 the chain is Cytoplasmic. A helical transmembrane segment spans residues Val351–Met371. The Extracellular segment spans residues Lys372 to Ser382. A helical membrane pass occupies residues Tyr383–Leu405. Topologically, residues Thr406–Arg427 are cytoplasmic. A helical transmembrane segment spans residues Phe428–Gly448. Over Pro449–Ser456 the chain is Extracellular. The pore-forming intramembrane region spans Leu457 to Phe477. A Selectivity filter motif is present at residues Asn469–Phe474. At Ala478–Trp491 the chain is on the extracellular side. The helical transmembrane segment at Leu492 to Phe513 threads the bilayer. Residues Ile514 to Asn580 lie on the Cytoplasmic side of the membrane. Ser557 carries the post-translational modification Phosphoserine. Ser559 carries the phosphoserine; by PAK modification. The required for palmitoylation and association with membranes stretch occupies residues Cys565–Cys567. Positions Glu573–Leu578 match the Dileucine internalization motif; mediates AP2 complex-dependent internalization motif.

It belongs to the transient receptor (TC 1.A.4) family. Polycystin subfamily. MCOLN1 sub-subfamily. In terms of assembly, homotetramer. Homooligomer. Can heterooligomerize with MCOLN2 or MCOLN3; heteromeric assemblies have different channel properties as compared to the respective homooligomers and may be tissue-specific. Interacts with PDCD6. Interacts with TMEM163. Interacts with LAPTM4B. In terms of processing, palmitoylated; involved in association with membranes. Phosphorylation by PKA inhibits channel activity. Dephosphorylation increases activity. Post-translationally, proteolytically cleaved probably involving multiple lysosomal proteases including cathepsin B; inhibits lysosomal channel activity. In terms of tissue distribution, widely expressed, with the highest expression in brain, liver and kidney.

The protein resides in the late endosome membrane. It localises to the lysosome membrane. The protein localises to the cytoplasmic vesicle membrane. It is found in the cell projection. Its subcellular location is the phagocytic cup. The protein resides in the cytoplasmic vesicle. It localises to the phagosome membrane. The protein localises to the cell membrane. It catalyses the reaction Ca(2+)(in) = Ca(2+)(out). It carries out the reaction Fe(2+)(in) = Fe(2+)(out). The catalysed reaction is Mg(2+)(in) = Mg(2+)(out). The enzyme catalyses K(+)(in) = K(+)(out). It catalyses the reaction Na(+)(in) = Na(+)(out). Its activity is regulated as follows. Channel activity is controlled by multiple regulatory mechanisms in different subcellular compartments. Lower pH by itself has an inhibitory effect on channel conductance. Channel function is transiently modulated by changes in Ca(2+) in a pH-dependent manner; pH changes modify the aggregation state of unitary channels; a negative cooperativity between extracellular/lumenal Ca(2+) and H(+) is suggested. Fe(2+) channel activity is potentiated by low pH. Regulated by phosphoinositides in a compartment-specific manner: in lysosomes activated by PtdIns(3,5)P2 (Phosphatidylinositol 3,5-bisphosphate) and at the plasma membrane inhibited by PtdIns(4,5)P2 (Phosphatidylinositol 4,5-bisphosphate). Its function is as follows. Nonselective cation channel probably playing a role in the regulation of membrane trafficking events and of metal homeostasis. Acts as a Ca(2+)-permeable cation channel with inwardly rectifying activity. Proposed to play a major role in Ca(2+) release from late endosome and lysosome vesicles to the cytoplasm, which is important for many lysosome-dependent cellular events, including the fusion and trafficking of these organelles, exocytosis and autophagy. Required for efficient uptake of large particles in macrophages in which Ca(2+) release from the lysosomes triggers lysosomal exocytosis. May also play a role in phagosome-lysosome fusion. Involved in lactosylceramide trafficking indicative for a role in the regulation of late endocytic membrane fusion/fission events. By mediating lysosomal Ca(2+) release is involved in regulation of mTORC1 signaling and in mTOR/TFEB-dependent lysosomal adaptation to environmental cues such as nutrient levels. Seems to act as lysosomal active oxygen species (ROS) sensor involved in ROS-induced TFEB activation and autophagy. Also functions as a Fe(2+) permeable channel in late endosomes and lysosomes. Also permeable to Mg(2+), Na(+). K(+) and Cs(+). Proposed to play a role in zinc homeostasis probably implicating its association with TMEM163. In adaptive immunity, TRPML2 and TRPML1 may play redundant roles in the function of the specialized lysosomes of B cells. May contribute to cellular lipase activity within the late endosomal pathway or at the cell surface which may be involved in processes of membrane reshaping and vesiculation, especially the growth of tubular structures. However, it is not known, whether it conveys the enzymatic activity directly, or merely facilitates the activity of an associated phospholipase. The chain is Mucolipin-1 from Mus musculus (Mouse).